Reading from the N-terminus, the 766-residue chain is 5-methyltetrahydropteroyltriglutamate--homocysteine methyltransferase (766 aa).

5-methyltetrahydropteroyltri-L-glutamate is bound by residues Arg-23–Lys-26 and Lys-121. L-homocysteine-binding positions include Ile-438–Ser-440 and Glu-491. Residues Ile-438–Ser-440 and Glu-491 each bind L-methionine. 5-methyltetrahydropteroyltri-L-glutamate is bound by residues Arg-522 to Cys-523 and Trp-568. Position 606 (Asp-606) interacts with L-homocysteine. Asp-606 lines the L-methionine pocket. Glu-612 contacts 5-methyltetrahydropteroyltri-L-glutamate. Zn(2+)-binding residues include His-648, Cys-650, and Glu-672. His-701 (proton donor) is an active-site residue. Cys-733 contacts Zn(2+).

This sequence belongs to the vitamin-B12 independent methionine synthase family. Requires Zn(2+) as cofactor.

The catalysed reaction is 5-methyltetrahydropteroyltri-L-glutamate + L-homocysteine = tetrahydropteroyltri-L-glutamate + L-methionine. Its pathway is amino-acid biosynthesis; L-methionine biosynthesis via de novo pathway; L-methionine from L-homocysteine (MetE route): step 1/1. Its function is as follows. Catalyzes the transfer of a methyl group from 5-methyltetrahydrofolate to homocysteine resulting in methionine formation. The chain is 5-methyltetrahydropteroyltriglutamate--homocysteine methyltransferase from Photobacterium profundum (strain SS9).